Here is a 253-residue protein sequence, read N- to C-terminus: NAD(P)H-quinone oxidoreductase subunit K (253 aa).

Residues C68, C69, C133, and C164 each coordinate [4Fe-4S] cluster.

It belongs to the complex I 20 kDa subunit family. In terms of assembly, NDH-1 can be composed of about 15 different subunits; different subcomplexes with different compositions have been identified which probably have different functions. The cofactor is [4Fe-4S] cluster.

It localises to the cellular thylakoid membrane. The enzyme catalyses a plastoquinone + NADH + (n+1) H(+)(in) = a plastoquinol + NAD(+) + n H(+)(out). It carries out the reaction a plastoquinone + NADPH + (n+1) H(+)(in) = a plastoquinol + NADP(+) + n H(+)(out). NDH-1 shuttles electrons from an unknown electron donor, via FMN and iron-sulfur (Fe-S) centers, to quinones in the respiratory and/or the photosynthetic chain. The immediate electron acceptor for the enzyme in this species is believed to be plastoquinone. Couples the redox reaction to proton translocation, and thus conserves the redox energy in a proton gradient. Cyanobacterial NDH-1 also plays a role in inorganic carbon-concentration. The polypeptide is NAD(P)H-quinone oxidoreductase subunit K (Synechococcus sp. (strain CC9311)).